A 52-amino-acid chain; its full sequence is SVDCSEYPKPACPKDYRPVCGSDNKTYGNKCNFCNAVVESNGTLTLNRFGKC.

Residues 2-52 (VDCSEYPKPACPKDYRPVCGSDNKTYGNKCNFCNAVVESNGTLTLNRFGKC) enclose the Kazal-like domain. Cystine bridges form between C4-C34, C12-C31, and C20-C52. N41 carries an N-linked (GlcNAc...) asparagine glycan.

It is found in the secreted. The protein is Ovomucoid of Coturnix delegorguei (Harlequin quail).